A 348-amino-acid polypeptide reads, in one-letter code: Mannonate dehydratase (348 aa).

This sequence belongs to the mannonate dehydratase family. The cofactor is Fe(2+). Mn(2+) serves as cofactor.

It catalyses the reaction D-mannonate = 2-dehydro-3-deoxy-D-gluconate + H2O. The protein operates within carbohydrate metabolism; pentose and glucuronate interconversion. Its function is as follows. Catalyzes the dehydration of D-mannonate. This chain is Mannonate dehydratase, found in Streptococcus agalactiae serotype Ia (strain ATCC 27591 / A909 / CDC SS700).